The following is a 427-amino-acid chain: tRNA(Ile)-lysidine synthase (427 aa).

Residue 27–32 (SGGVDS) coordinates ATP.

This sequence belongs to the tRNA(Ile)-lysidine synthase family.

It localises to the cytoplasm. It carries out the reaction cytidine(34) in tRNA(Ile2) + L-lysine + ATP = lysidine(34) in tRNA(Ile2) + AMP + diphosphate + H(+). Ligates lysine onto the cytidine present at position 34 of the AUA codon-specific tRNA(Ile) that contains the anticodon CAU, in an ATP-dependent manner. Cytidine is converted to lysidine, thus changing the amino acid specificity of the tRNA from methionine to isoleucine. This is tRNA(Ile)-lysidine synthase from Streptococcus equi subsp. zooepidemicus (strain H70).